The following is a 742-amino-acid chain: Zinc finger MYND domain-containing protein 15 (742 aa).

The tract at residues 109–199 (LEDGEEGEEE…QKRKGQRSEA (91 aa)) is disordered. Over residues 110-127 (EDGEEGEEEEEEDEEEEK) the composition is skewed to acidic residues. A compositionally biased stretch (polar residues) spans 151–161 (SRESPQETNPP). Positions 166–189 (EAAREAGGGKDGCREDRVENETRP) are enriched in basic and acidic residues. Zn(2+) contacts are provided by Cys-313, Cys-316, Cys-328, Cys-331, Cys-337, Cys-341, His-355, and Cys-359. The segment at 313 to 359 (CHVCHRHSFEAKLTPCPQCSAVLYCGEACLRADWQRCPDDVSHRFWC) adopts an MYND-type zinc-finger fold. Disordered stretches follow at residues 565–590 (EVSVRPGSGISARPSSGTKEKGGRRD) and 701–742 (QGSG…RRRK). A compositionally biased stretch (pro residues) spans 708–724 (APGPPPPSPTPSAPPAP). A compositionally biased stretch (basic residues) spans 725–742 (TRRRRGEKKPGRGARRRK).

As to quaternary structure, interacts with HDAC1, HDAC3, HDAC6 and, to a lesser extent, with HDAC7.

Its subcellular location is the nucleus. It is found in the cytoplasm. Its function is as follows. Acts as a transcriptional repressor through interaction with histone deacetylases (HDACs). May be important for spermiogenesis. The chain is Zinc finger MYND domain-containing protein 15 (ZMYND15) from Homo sapiens (Human).